A 209-amino-acid chain; its full sequence is Putative thymidylate synthase (209 aa).

The active site involves Cys137.

Belongs to the thymidylate synthase family. Archaeal-type ThyA subfamily. In terms of assembly, monomer.

The protein localises to the cytoplasm. The protein operates within pyrimidine metabolism; dTTP biosynthesis. Functionally, may catalyze the biosynthesis of dTMP using an unknown cosubstrate. This is Putative thymidylate synthase from Methanopyrus kandleri (strain AV19 / DSM 6324 / JCM 9639 / NBRC 100938).